Reading from the N-terminus, the 371-residue chain is Putative glutamate--cysteine ligase 2 (371 aa).

This sequence belongs to the glutamate--cysteine ligase type 2 family. YbdK subfamily.

It catalyses the reaction L-cysteine + L-glutamate + ATP = gamma-L-glutamyl-L-cysteine + ADP + phosphate + H(+). Functionally, ATP-dependent carboxylate-amine ligase which exhibits weak glutamate--cysteine ligase activity. The polypeptide is Putative glutamate--cysteine ligase 2 (Cupriavidus pinatubonensis (strain JMP 134 / LMG 1197) (Cupriavidus necator (strain JMP 134))).